A 119-amino-acid chain; its full sequence is Inner membrane protein YijD (119 aa).

The Cytoplasmic portion of the chain corresponds to 1 to 8; that stretch reads MKQANQDR. The chain crosses the membrane as a helical span at residues 9–28; that stretch reads GTLLLALVAGLSINGTFAAL. At 29 to 31 the chain is on the periplasmic side; that stretch reads FSS. Residues 32–50 traverse the membrane as a helical segment; the sequence is IVPFSVFPIISLVLTVYCL. Topologically, residues 51–61 are cytoplasmic; it reads HQRYLNRTMPV. A helical transmembrane segment spans residues 62-84; that stretch reads GLPGLAAACFILGVLLYSTVVRA. The Periplasmic portion of the chain corresponds to 85–88; that stretch reads EYPD. A helical transmembrane segment spans residues 89 to 108; sequence IGSNFFPAVLSVIMVFWIGA. The Cytoplasmic segment spans residues 109–119; sequence KMRNRKQEVAE.

It is found in the cell inner membrane. This is Inner membrane protein YijD (yijD) from Escherichia coli O6:H1 (strain CFT073 / ATCC 700928 / UPEC).